A 425-amino-acid chain; its full sequence is 1,4-beta-D-glucan glucohydrolase (425 aa).

Catalysis depends on glutamate 164, which acts as the Proton donor. Glutamate 349 serves as the catalytic Nucleophile.

This sequence belongs to the glycosyl hydrolase 1 family. As to quaternary structure, monomer.

The catalysed reaction is Hydrolysis of (1-&gt;4)-linkages in (1-&gt;4)-beta-D-glucans, to remove successive glucose units.. The enzyme catalyses Hydrolysis of terminal, non-reducing beta-D-glucosyl residues with release of beta-D-glucose.. Its pathway is glycan metabolism; cellulose degradation. It participates in glycan metabolism; beta-D-glucan degradation. In terms of biological role, broad substrate specificity glycosidase. Releases glucose from soluble glucooligomers, with a preference for longer oligomers; acts more readily on cellotetraose than on cellobiose. Displays similar activities towards the disaccharides lactose and cellobiose. Is also able to hydrolyze various aryl-beta-glycosides in vitro. This Thermotoga neapolitana protein is 1,4-beta-D-glucan glucohydrolase (bglA).